A 130-amino-acid chain; its full sequence is UPF0212 protein TSIB_1358 (130 aa).

It belongs to the UPF0212 family.

The sequence is that of UPF0212 protein TSIB_1358 from Thermococcus sibiricus (strain DSM 12597 / MM 739).